A 295-amino-acid polypeptide reads, in one-letter code: uncharacterized protein (295 aa).

The protein belongs to the NAD(P)-dependent epimerase/dehydratase family.

This is an uncharacterized protein from Schizosaccharomyces pombe (strain 972 / ATCC 24843) (Fission yeast).